A 66-amino-acid polypeptide reads, in one-letter code: Large ribosomal subunit protein bL33c (66 aa).

Belongs to the bacterial ribosomal protein bL33 family.

The protein resides in the plastid. The protein localises to the chloroplast. The protein is Large ribosomal subunit protein bL33c of Angiopteris evecta (Mule's foot fern).